We begin with the raw amino-acid sequence, 441 residues long: MTGSLWLSLALSLAVLAQFKVSAAPNLVCFYDSQGFQRQGLAQFSMTDMELALQFCTHLVYGYAGVNADNYEMQSINKRLDLEQRHLAQVSSLKERYPHIKFLLSVGGDADTNEGNQYIKLLESGQQGHRRFIESARDLVRRYNFDGLDLALQLPRNKPRKVHGDVGSAWKSFKKFFTGDFIVDTDSETHKGQVTALIKDLSAALKQNDLLLSLTVLPNVNSSWYYDAPSIAPSLDFINLGTFDFLTPQRNPEEADFSAPTYEAVGQNRLGHYNLNFQTEHWLLQRVPANKINIGIATYGRTWKMTKDSGDSGMPVVPSTQGPAPAGPQSKKEGLLNWAEICSLMPNPGNTNARGPSAPVKRVLDPTKRYGSYAFRAADENGDHGLWISYDDPDSASSKAMFARVRNLGGVALFDLTQDDFRGQCTNDRFPMLRAIKYRLL.

The first 23 residues, 1-23, serve as a signal peptide directing secretion; the sequence is MTGSLWLSLALSLAVLAQFKVSA. The region spanning 25 to 441 is the GH18 domain; sequence PNLVCFYDSQ…MLRAIKYRLL (417 aa). Cysteines 29 and 56 form a disulfide. Residue N221 is glycosylated (N-linked (GlcNAc...) asparagine). The segment at 309 to 331 is disordered; it reads SGDSGMPVVPSTQGPAPAGPQSK. An intrachain disulfide couples C342 to C425.

This sequence belongs to the glycosyl hydrolase 18 family. IDGF subfamily. In terms of processing, glycosylated.

It is found in the secreted. Cooperates with insulin-like peptides to stimulate the proliferation, polarization and motility of imaginal disk cells. May act by stabilizing the binding of insulin-like peptides to its receptor through a simultaneous interaction with both molecules to form a multiprotein signaling complex. This Drosophila yakuba (Fruit fly) protein is Chitinase-like protein Idgf3 (Idgf3).